The primary structure comprises 458 residues: Tetratricopeptide repeat protein 23-like (458 aa).

Coiled coils occupy residues G175–G198 and T246–S278.

It is found in the cytoplasm. Its subcellular location is the cytoskeleton. The protein localises to the microtubule organizing center. It localises to the centrosome. The protein resides in the spindle. It is found in the midbody. This Mus musculus (Mouse) protein is Tetratricopeptide repeat protein 23-like (Ttc23l).